A 549-amino-acid chain; its full sequence is MAQLAGQPILILPEGTQRYVGRDAQRMNILAARIIAETVRTTLGPKGMDKMLVDSLGDIVITNDGATILDEMDIQHPAAKMMVEVAKTQDKEAGDGTTTAVVIAGELLKKAEELLDQNIHPSIIIKGYTLASQKAQEILDSIAKEVKPDDEEVLLKAAMTAITGKAAEEEREYLAKLAVEAVKLVAEEKDGKLKVDIDNIKLEKKEGGAVRDTRLIRGVVIDKEVVHPGMPKRIENAKIALINDALEVKETETDAEIRITSPEQLQAFLEQEEKMLKEMVDKIKEVGANVVFVQKGIDDLAQHYLAKYGILAVRRVKKSDMEKLAKATGAKIVTNIRDLTPEDLGEAELVEERKVAGENMIFVEGCKNPKAVTILIRGGTEHVVDEVERALEDAIKVVKDILEDGKIIAGGGASEIELSIKLDEYAKEVGGKEQLAIEAFAEALKVIPRTLAENAGLDPIETLVKVIAAHKEKGQTIGIDVYEGEPADMMERGVIEPVRVKKQAIKSASEAAIMILRIDDVIAASKLEKEKEGEKGGGSEEFSGSSDLD.

Over residues 528–538 (EKEKEGEKGGG) the composition is skewed to basic and acidic residues. A disordered region spans residues 528 to 549 (EKEKEGEKGGGSEEFSGSSDLD). A compositionally biased stretch (low complexity) spans 540–549 (EEFSGSSDLD).

The protein belongs to the TCP-1 chaperonin family. In terms of assembly, forms an oligomeric complex of eight-membered rings.

In terms of biological role, molecular chaperone; binds unfolded polypeptides in vitro, and has a weak ATPase activity. The protein is Thermosome subunit (ths) of Pyrococcus horikoshii (strain ATCC 700860 / DSM 12428 / JCM 9974 / NBRC 100139 / OT-3).